A 93-amino-acid polypeptide reads, in one-letter code: Large ribosomal subunit protein uL23 (93 aa).

This sequence belongs to the universal ribosomal protein uL23 family. Part of the 50S ribosomal subunit. Contacts protein L29, and trigger factor when it is bound to the ribosome.

Functionally, one of the early assembly proteins it binds 23S rRNA. One of the proteins that surrounds the polypeptide exit tunnel on the outside of the ribosome. Forms the main docking site for trigger factor binding to the ribosome. The chain is Large ribosomal subunit protein uL23 from Campylobacter jejuni subsp. jejuni serotype O:6 (strain 81116 / NCTC 11828).